The chain runs to 62 residues: Small, acid-soluble spore protein A (62 aa).

The protein belongs to the alpha/beta-type SASP family.

In terms of biological role, SASP are bound to spore DNA. They are double-stranded DNA-binding proteins that cause DNA to change to an a-like conformation. They protect the DNA backbone from chemical and enzymatic cleavage and are thus involved in dormant spore's high resistance to UV light. The chain is Small, acid-soluble spore protein A (sasP-A) from Priestia megaterium (Bacillus megaterium).